A 442-amino-acid polypeptide reads, in one-letter code: PTS system oligo-beta-mannoside-specific EIIC component (442 aa).

Residues 5–411 (ISQFLVPIAG…LIVFVIWFPF (407 aa)) form the PTS EIIC type-3 domain. The next 11 membrane-spanning stretches (helical) occupy residues 28–48 (AFML…LTNL), 67–87 (FGIA…FGIG), 97–117 (EAVF…PFII), 138–157 (GMFL…RRIV), 177–197 (FAAL…NVMV), 205–225 (MHDV…SGII), 228–248 (LIAV…QIII), 286–306 (TVGM…LIFM), 329–349 (PIIF…WVLA), 365–385 (LVPP…INGI), and 391–411 (IMGG…WFPF).

Its subcellular location is the cell membrane. The phosphoenolpyruvate-dependent sugar phosphotransferase system (sugar PTS), a major carbohydrate active transport system, catalyzes the phosphorylation of incoming sugar substrates concomitantly with their translocation across the cell membrane. The enzyme II GmuABC PTS system is involved in the transport of oligo-glucomannans such as cellobiose or mannobiose. This chain is PTS system oligo-beta-mannoside-specific EIIC component, found in Bacillus subtilis (strain 168).